Consider the following 333-residue polypeptide: Gap junction alpha-4 protein (333 aa).

Residues 1–20 (MGDWGFLEKLLDQVQEHSTV) lie on the Cytoplasmic side of the membrane. The chain crosses the membrane as a helical span at residues 21–40 (VGKIWLTVLFIFRILILGLA). Topologically, residues 41–76 (GESVWGDEQSDFECNTAQPGCTNVCYDQAFPISHIR) are extracellular. The helical transmembrane segment at 77–99 (YWVLQFLFVSTPTLVYLGHVIYL) threads the bilayer. At 100–148 (SRREERLRQKEGELRALPAKDPQVERALAAVERQMAKISVAEDGRLRIR) the chain is on the cytoplasmic side. The chain crosses the membrane as a helical span at residues 149–165 (GALMGTYVASVLCKSVL). Residues 166 to 207 (EAGFLYGQWRLYGWTMEPVFVCQRAPCPYLVDCFVSRPTEKT) lie on the Extracellular side of the membrane. Residues 208-230 (IFIIFMLVVGLISLVLNLLELVH) traverse the membrane as a helical segment. Residues 231–333 (LLCRCLSRGM…SSSASKKQYV (103 aa)) are Cytoplasmic-facing. A disordered region spans residues 292-333 (ANLTTEERLASSRPPLFLDPPPQNGQKPPSRPSSSASKKQYV). Residues 323–333 (PSSSASKKQYV) show a composition bias toward low complexity.

Belongs to the connexin family. Alpha-type (group II) subfamily. As to quaternary structure, a connexon is composed of a hexamer of connexins. Expressed in multiple organs and tissues, including heart, uterus, ovary, and blood vessel endothelium.

Its subcellular location is the cell membrane. It localises to the cell junction. The protein resides in the gap junction. Its function is as follows. One gap junction consists of a cluster of closely packed pairs of transmembrane channels, the connexons, through which materials of low MW diffuse from one cell to a neighboring cell. This is Gap junction alpha-4 protein (GJA4) from Homo sapiens (Human).